The sequence spans 199 residues: SCO2-like protein RC0042 (199 aa).

The protein belongs to the SCO1/2 family.

This chain is SCO2-like protein RC0042, found in Rickettsia conorii (strain ATCC VR-613 / Malish 7).